A 467-amino-acid polypeptide reads, in one-letter code: Syntaxin-5 (467 aa).

Disordered stretches follow at residues 1 to 53 (MQTR…QSLV) and 58 to 77 (GHEA…SIST). At 1 to 445 (MQTRRRLHQT…KYFQSVSKNR (445 aa)) the chain is on the cytoplasmic side. The span at 10–22 (TDQQDYSSSSTYT) shows a compositional bias: low complexity. The segment covering 29-45 (GGAGAGSVGTGTAGGSV) has biased composition (gly residues). Residues 68 to 77 (NYQSGDSIST) are compositionally biased toward polar residues. Residues 245–269 (IKGDLNALNQQIARLQDISKDQRRH) adopt a coiled-coil conformation. A disordered region spans residues 310 to 335 (QQKTRRDQFSQGPGPLAAHTVSPSTA). Positions 375–437 (DNYVQQRAET…EAAHGEILKY (63 aa)) constitute a t-SNARE coiled-coil homology domain. Residues 446–466 (WLMIKIFGVLIFFFLFFVVFM) form a helical; Anchor for type IV membrane protein membrane-spanning segment. Position 467 (Ser467) is a topological domain, vesicular.

Belongs to the syntaxin family. In terms of assembly, homodimer.

Its subcellular location is the golgi apparatus. It is found in the cis-Golgi network membrane. Mediates endoplasmic reticulum to Golgi transport. The chain is Syntaxin-5 from Drosophila melanogaster (Fruit fly).